A 203-amino-acid chain; its full sequence is N-(5'-phosphoribosyl)anthranilate isomerase (203 aa).

This sequence belongs to the TrpF family.

The catalysed reaction is N-(5-phospho-beta-D-ribosyl)anthranilate = 1-(2-carboxyphenylamino)-1-deoxy-D-ribulose 5-phosphate. The protein operates within amino-acid biosynthesis; L-tryptophan biosynthesis; L-tryptophan from chorismate: step 3/5. This is N-(5'-phosphoribosyl)anthranilate isomerase from Thermoanaerobacter sp. (strain X514).